The following is a 78-amino-acid chain: RNA-binding protein KhpA (78 aa).

A KH domain is found at Thr29–Arg78.

This sequence belongs to the KhpA RNA-binding protein family.

Its subcellular location is the cytoplasm. A probable RNA-binding protein. The protein is RNA-binding protein KhpA of Chlamydia trachomatis serovar D (strain ATCC VR-885 / DSM 19411 / UW-3/Cx).